The chain runs to 421 residues: Testin (421 aa).

The PET domain maps to 92 to 199 (MILTNPVAAK…GDVKLPREMD (108 aa)). Residues 134 to 164 (KQPVAGSEGAQYRKKQLAKQLPAHDQDPSKC) form a disordered region. Positions 155-164 (PAHDQDPSKC) are enriched in basic and acidic residues. LIM zinc-binding domains are found at residues 234-297 (YSCY…CDSE), 299-359 (PRCA…NHAV), and 362-421 (QGCH…KMMS).

Belongs to the prickle / espinas / testin family. As to quaternary structure, interacts via LIM domain 1 with ZYX. Interacts (via LIM domain 3) with ENAH and VASP. Interacts with ALKBH4, talin, actin, alpha-actinin, GRIP1 and PXN. Interacts (via LIM domain 2) with ACTL7A (via N-terminus). Heterodimer with ACTL7A; the heterodimer interacts with ENAH to form a heterotrimer.

It is found in the cytoplasm. It localises to the cell junction. The protein localises to the focal adhesion. Scaffold protein that may play a role in cell adhesion, cell spreading and in the reorganization of the actin cytoskeleton. Plays a role in the regulation of cell proliferation. May act as a tumor suppressor. The sequence is that of Testin (TES) from Rhinolophus ferrumequinum (Greater horseshoe bat).